Consider the following 576-residue polypeptide: Immunoglobulin mu heavy chain (576 aa).

Position 1 is a pyrrolidone carboxylic acid (Q1). 5 consecutive Ig-like domains span residues Q1–C97, P132–C212, P236–S334, P352–S442, and P452–D553. The tract at residues Q1–V124 is variable (V) domain, involved in antigen recognition. Cystine bridges form between C22–C97, C153–C212, and C259–C320. N-linked (GlcNAc...) asparagine glycans are attached at residues N74 and N170. The interval S125–Y576 is constant (C) domain. Residues N332, N395, and N402 are each glycosylated (N-linked (GlcNAc...) asparagine). 2 disulfides stabilise this stretch: C367–C426 and C474–C536. N563 carries N-linked (GlcNAc...) asparagine glycosylation.

As to quaternary structure, immunoglobulins are composed of two identical heavy chains and two identical light chains; disulfide-linked. It is found almost exclusively as a homopentamer in the serum. Membrane-bound IgM molecules are non-covalently associated with heterodimer of CD79A and CD79B.

It is found in the secreted. The protein localises to the cell membrane. Immunoglobulins, also known as antibodies, are membrane-bound or secreted glycoproteins produced by B lymphocytes. In the recognition phase of humoral immunity, the membrane-bound immunoglobulins serve as receptors which, upon binding of a specific antigen, trigger the clonal expansion and differentiation of B lymphocytes into immunoglobulins-secreting plasma cells. Secreted immunoglobulins mediate the effector phase of humoral immunity, which results in the elimination of bound antigens. The antigen binding site is formed by the variable domain of one heavy chain, together with that of its associated light chain. Thus, each immunoglobulin has two antigen binding sites with remarkable affinity for a particular antigen. The variable domains are assembled by a process called V-(D)-J rearrangement and can then be subjected to somatic hypermutations which, after exposure to antigen and selection, allow affinity maturation for a particular antigen. IgM antibodies play an important role in primary defense mechanisms. They have been shown to be involved in early recognition of external invaders like bacteria and viruses, cellular waste and modified self, as well as in recognition and elimination of precancerous and cancerous lesions. The membrane-bound form is found in the majority of normal B cells alongside with IgD. Membrane-bound IgM induces the phosphorylation of CD79A and CD79B by the Src family of protein tyrosine kinases. It may cause death of cells by apoptosis. It is also found in soluble form, which represents about 30% of the total serum immunoglobulins where it is found almost exclusively as a homopentamer. After the antigen binds to the B cell receptor, the secreted form is secreted in large amounts (, PubMed:16895553). The protein is Immunoglobulin mu heavy chain of Homo sapiens (Human).